A 417-amino-acid chain; its full sequence is Serine hydroxymethyltransferase (417 aa).

(6S)-5,6,7,8-tetrahydrofolate is bound by residues L120 and 124–126 (GHL). The residue at position 229 (K229) is an N6-(pyridoxal phosphate)lysine.

It belongs to the SHMT family. In terms of assembly, homodimer. It depends on pyridoxal 5'-phosphate as a cofactor.

It localises to the cytoplasm. The catalysed reaction is (6R)-5,10-methylene-5,6,7,8-tetrahydrofolate + glycine + H2O = (6S)-5,6,7,8-tetrahydrofolate + L-serine. It participates in one-carbon metabolism; tetrahydrofolate interconversion. It functions in the pathway amino-acid biosynthesis; glycine biosynthesis; glycine from L-serine: step 1/1. Its function is as follows. Catalyzes the reversible interconversion of serine and glycine with tetrahydrofolate (THF) serving as the one-carbon carrier. This reaction serves as the major source of one-carbon groups required for the biosynthesis of purines, thymidylate, methionine, and other important biomolecules. Also exhibits THF-independent aldolase activity toward beta-hydroxyamino acids, producing glycine and aldehydes, via a retro-aldol mechanism. The polypeptide is Serine hydroxymethyltransferase (Anaeromyxobacter sp. (strain K)).